A 503-amino-acid polypeptide reads, in one-letter code: MWSALFSHLREVHKRSGVKEEKLIMKSPAAAGEAAGCHKPQATATNKMTVLQSPLGLRTILTSLVAFFIVVSSVSLLFDRSQDAQAQLAVAQHQHQEVQLKQKPASAAVGEQKSVFVDQSSLRSQEAQVQWTSELQDVATDSGDGGVDGEEECNWSLGRWVYDNSSRPLYSGLKCSFIFDEVACDKYGRNDTKYQHWRWQPHGCNLPRFNATKFLEKLRNKRLVFVGDSVNRNQWVSMVCMVEHFIPDGRKMRVYNGSLISFKAFEYNATIDFYWSPLLLESNSDNPIIHRVEYRIIRADRIEKHANVWKDADFIVFNSYLWWRKQRDGMTMKVMYGSFEDGDAKLDEVEMVDGYEIALKKLTEYLGANINKNKTRIFFAGSSPAHSWASNWGGDDNNKCLNETEPIQIEDYRSATTDYGMMDKAKEIFGTLEPKGIHVQILNITQLSEYRKDAHPTIFRRQYVPLTKEQIANPSIYADCTHWCLPGVPDVWNEFLYAYLMHK.

Topologically, residues 1–54 (MWSALFSHLREVHKRSGVKEEKLIMKSPAAAGEAAGCHKPQATATNKMTVLQSP) are cytoplasmic. A helical; Signal-anchor for type II membrane protein transmembrane segment spans residues 55–77 (LGLRTILTSLVAFFIVVSSVSLL). The Lumenal portion of the chain corresponds to 78-503 (FDRSQDAQAQ…EFLYAYLMHK (426 aa)). Cystine bridges form between Cys-153-Cys-204, Cys-175-Cys-240, Cys-184-Cys-484, and Cys-400-Cys-480. 4 N-linked (GlcNAc...) asparagine glycosylation sites follow: Asn-154, Asn-164, Asn-190, and Asn-210. Residues 227-229 (GDS) carry the GDS motif motif. Ser-229 serves as the catalytic Nucleophile. Asn-256, Asn-268, Asn-373, Asn-402, and Asn-443 each carry an N-linked (GlcNAc...) asparagine glycan. Asp-479 functions as the Proton donor in the catalytic mechanism. Positions 479–482 (DCTH) match the DXXH motif motif. His-482 serves as the catalytic Proton acceptor.

It belongs to the PC-esterase family. TBL subfamily.

It is found in the golgi apparatus membrane. Functionally, xylan acetyltransferase required for 2-O- and 3-O-monoacetylation of xylosyl residues in xylan. Catalyzes the 2-O-acetylation of xylan, followed by nonenzymatic acetyl migration to the O-3 position, resulting in products that are monoacetylated at both O-2 and O-3 positions. The polypeptide is Xylan O-acetyltransferase 12 (Oryza sativa subsp. japonica (Rice)).